Here is a 569-residue protein sequence, read N- to C-terminus: Carotenoid cleavage dioxygenase 8 homolog B, chloroplastic (569 aa).

The transit peptide at 1–43 directs the protein to the chloroplast; sequence MSPAMLQASSLCVSAALSGAASRPGRLASQGHQGKRAVAQPLA. A disordered region spans residues 23 to 81; sequence RPGRLASQGHQGKRAVAQPLAASAVTEAAPPAPVVAPPARPVDAPRRRGGRGGGGGGGE. A compositionally biased stretch (pro residues) spans 52–62; it reads PPAPVVAPPAR. Residues His-251, His-301, His-368, and His-558 each contribute to the Fe cation site.

The protein belongs to the carotenoid oxygenase family. The cofactor is Fe(2+). Expressed in parenchyma cells of the root stele, shoot apex, leaf buds, xylem parenchyma cells of the stem, inflorescences and panicles.

The protein resides in the plastid. It is found in the chloroplast. The catalysed reaction is 9-cis-10'-apo-beta-carotenal + 2 O2 = (2E,4E,6E)-7-hydroxy-4-methylhepta-2,4,6-trienal + (11R)-carlactone. The enzyme catalyses all-trans-10'-apo-beta-carotenal + O2 = (2E,4E,6E)-4-methylocta-2,4,6-trienedial + 13-apo-beta-carotenone. Involved in strigolactones biosynthesis by cleaving the C(27) 9-cis-10'-apo-beta-carotenal produced by CCD7. Produces the C(19) carlactone and a C(8) hydroxyaldehyde. Also shows lower activity with all-trans-10'-apo-beta-carotenal producing a C(9) dialdehyde and the C(18) 13-apo-beta-carotenone. Strigolactones are hormones that inhibit tillering and shoot branching through the MAX-dependent pathway, contribute to the regulation of shoot architectural response to phosphate-limiting conditions and function as rhizosphere signal that stimulates hyphal branching of arbuscular mycorrhizal fungi and trigger seed germination of root parasitic weeds. The sequence is that of Carotenoid cleavage dioxygenase 8 homolog B, chloroplastic (CCD8B) from Oryza sativa subsp. japonica (Rice).